The sequence spans 494 residues: Ribosomal lysine N-methyltransferase 4 (494 aa).

The region spanning 25–265 (PKIEIKDLCC…KNEQVYNIYG (241 aa)) is the SET domain. Position 264 (Tyr-264) interacts with S-adenosyl-L-methionine.

Belongs to the class V-like SAM-binding methyltransferase superfamily. Histone-lysine methyltransferase family. SETD6 subfamily.

The protein localises to the nucleus. Its function is as follows. S-adenosyl-L-methionine-dependent protein-lysine N-methyltransferase that monomethylates 60S ribosomal protein L42 (RPL42A and RPL42B) at 'Lys-55'. In Saccharomyces cerevisiae (strain ATCC 204508 / S288c) (Baker's yeast), this protein is Ribosomal lysine N-methyltransferase 4.